The sequence spans 77 residues: Small ribosomal subunit protein uS17 (77 aa).

It belongs to the universal ribosomal protein uS17 family. In terms of assembly, part of the 30S ribosomal subunit.

One of the primary rRNA binding proteins, it binds specifically to the 5'-end of 16S ribosomal RNA. The sequence is that of Small ribosomal subunit protein uS17 from Rickettsia prowazekii (strain Madrid E).